The following is a 188-amino-acid chain: dCTP deaminase (188 aa).

DCTP-binding positions include Lys-111–Arg-116, Thr-135–Glu-137, Gln-156, Tyr-170, and Gln-180. The active-site Proton donor/acceptor is the Glu-137.

Belongs to the dCTP deaminase family. As to quaternary structure, homotrimer.

It carries out the reaction dCTP + H2O + H(+) = dUTP + NH4(+). It functions in the pathway pyrimidine metabolism; dUMP biosynthesis; dUMP from dCTP (dUTP route): step 1/2. Functionally, catalyzes the deamination of dCTP to dUTP. The polypeptide is dCTP deaminase (Azoarcus sp. (strain BH72)).